We begin with the raw amino-acid sequence, 199 residues long: MIEIPTGLPAELVPLSWLLGVWEGTGVVEYAVGDDVVRREFGQRISFSHDGLPHLNYSSYAWVEGDDGPVPFVTETGYWRLRRRVTDGDPGPAMLPPTGERPFTTADEVETLRNADGGFDVEVALVHPGGVSELYVGQVKSARIDLATDAVLRTEGAKAYTGATRLYGLVERDLLWAWDIAALGQPLRTHASGRVSHVD.

Positions 20 to 26 (GVWEGTG) match the GXWXGXG motif. Residue histidine 190 coordinates heme b.

This sequence belongs to the nitrobindin family. Homodimer. Heme b is required as a cofactor.

It catalyses the reaction peroxynitrite = nitrate. The protein operates within nitrogen metabolism. Heme-binding protein able to scavenge peroxynitrite and to protect free L-tyrosine against peroxynitrite-mediated nitration, by acting as a peroxynitrite isomerase that converts peroxynitrite to nitrate. Therefore, this protein likely plays a role in peroxynitrite sensing and in the detoxification of reactive nitrogen and oxygen species (RNS and ROS, respectively). Is able to bind nitric oxide (NO) in vitro, but may act as a sensor of peroxynitrite levels in vivo. The sequence is that of Peroxynitrite isomerase from Clavibacter michiganensis subsp. michiganensis (strain NCPPB 382).